Consider the following 796-residue polypeptide: Protein translocase subunit SecA 2 (796 aa).

ATP contacts are provided by residues Q84, 102-106, and D496; that span reads GEGKT.

The protein belongs to the SecA family. Monomer and homodimer. Part of the essential Sec protein translocation apparatus which comprises SecA, SecYEG and auxiliary proteins SecDF. Other proteins may also be involved.

The protein resides in the cell membrane. It is found in the cytoplasm. It carries out the reaction ATP + H2O + cellular proteinSide 1 = ADP + phosphate + cellular proteinSide 2.. Its function is as follows. Part of the Sec protein translocase complex. Interacts with the SecYEG preprotein conducting channel. Has a central role in coupling the hydrolysis of ATP to the transfer of proteins into and across the cell membrane, serving as an ATP-driven molecular motor driving the stepwise translocation of polypeptide chains across the membrane. The chain is Protein translocase subunit SecA 2 from Staphylococcus aureus (strain MRSA252).